The chain runs to 327 residues: Toluene-4-monooxygenase system, hydroxylase component subunit beta (327 aa).

The protein belongs to the TmoE/XamoE family. As to quaternary structure, the alkene monooxygenase multicomponent enzyme system is composed of an electron transfer component and a monooxygenase component interacting with the effector protein TmoD. The electron transfer component is composed of a ferredoxin reductase (TmoF) and a ferredoxin (TmoC), and the monooxygenase component is formed by a heterohexamer (dimer of heterotrimers) of two alpha subunits (TmoA), two beta subunits (TmoE) and two gamma subunits (TmoB).

It catalyses the reaction toluene + NADH + O2 + H(+) = 4-methylphenol + NAD(+) + H2O. Its pathway is xenobiotic degradation; toluene degradation. Inhibited by Zn(2+) and Cu(2+). Component of the toluene-4-monooxygenase multicomponent enzyme system which catalyzes the O2- and NADH-dependent hydroxylation of toluene to form p-cresol. Also able to convert benzene to phenol, catechol, and 1,2,3-trihydroxybenzene by successive hydroxylations. This is Toluene-4-monooxygenase system, hydroxylase component subunit beta from Ectopseudomonas mendocina (Pseudomonas mendocina).